We begin with the raw amino-acid sequence, 1203 residues long: Serine/threonine-protein kinase Nek1 (1203 aa).

In terms of domain architecture, Protein kinase spans 4-258; that stretch reads YVRLQKIGEG…VNSILEKGFI (255 aa). Residues 10-18 and lysine 33 each bind ATP; that span reads IGEGSFGKA. Catalysis depends on aspartate 128, which acts as the Proton acceptor. At threonine 156 the chain carries Phosphothreonine. Threonine 162 carries the post-translational modification Phosphothreonine; by autocatalysis. A disordered region spans residues 329–357; that stretch reads LLEKKPPPKHKQAHQIPVKKMNSGEERKK. Phosphoserine occurs at positions 417 and 437. At threonine 615 the chain carries Phosphothreonine. Serine 618 carries the phosphoserine modification. 2 disordered regions span residues 643 to 662 and 674 to 708; these read LTDT…SSKR and AQED…ISSD. The segment covering 674-683 has biased composition (basic and acidic residues); sequence AQEDEKEKQH. Phosphoserine occurs at positions 750, 786, 820, and 832. Disordered stretches follow at residues 814 to 866 and 888 to 925; these read PSAT…LPPV and AVQQ…GCDV. Residues 839 to 850 are compositionally biased toward acidic residues; sequence NVEEPDDLETEV. Serine 997 carries the post-translational modification Phosphoserine. 2 disordered regions span residues 1021–1045 and 1063–1120; these read SLEI…TVFE and REQP…ETTS. Serine 1071 bears the Phosphoserine mark.

This sequence belongs to the protein kinase superfamily. NEK Ser/Thr protein kinase family. NIMA subfamily. In terms of assembly, binds to CBY2. Found in a complex with CFAP410, NEK1 and SPATA7. Interacts with CFAP410. Interacts (via Ser-997 phosphorylated form) with 14-3-3 proteins. The cofactor is Mg(2+). Predominantly in testes (germ cells and Sertoli cells). Lower levels in ovary (oocytes and granulosa cells), thymus and lung.

The protein resides in the nucleus. It localises to the cytoplasm. Its subcellular location is the cytoskeleton. It is found in the microtubule organizing center. The protein localises to the centrosome. The catalysed reaction is L-seryl-[protein] + ATP = O-phospho-L-seryl-[protein] + ADP + H(+). It catalyses the reaction L-threonyl-[protein] + ATP = O-phospho-L-threonyl-[protein] + ADP + H(+). Phosphorylates serines and threonines, but also appears to possess tyrosine kinase activity. Involved in DNA damage checkpoint control and for proper DNA damage repair. In response to injury that includes DNA damage, NEK1 phosphorylates VDAC1 to limit mitochondrial cell death. May be implicated in the control of meiosis. Involved in cilium assembly. The chain is Serine/threonine-protein kinase Nek1 (Nek1) from Mus musculus (Mouse).